Reading from the N-terminus, the 133-residue chain is Heat shock protein 15 (133 aa).

Positions 9-71 (VRLDKWLWAA…DERTVIVKAI (63 aa)) constitute an S4 RNA-binding domain. The tract at residues 105–133 (NALTMPHPDRRPDKKERRDLLRFKHGDSE) is disordered. The span at 111 to 133 (HPDRRPDKKERRDLLRFKHGDSE) shows a compositional bias: basic and acidic residues.

Belongs to the HSP15 family. In terms of assembly, monomer.

Functionally, involved in the recycling of free 50S ribosomal subunits that still carry a nascent chain. Binds RNA more specifically than DNA. Binds with very high affinity to the free 50S ribosomal subunit. Does not bind it when it is part of the 70S ribosome. This chain is Heat shock protein 15 (hslR), found in Escherichia coli O157:H7.